A 973-amino-acid polypeptide reads, in one-letter code: Splicing regulator ARVCF (973 aa).

Residues 95 to 123 (VTVEEDPGTPTSHVSIVTSEDGTTRRTET) are disordered. 2 positions are modified to phosphothreonine: Thr-103 and Thr-105. Polar residues predominate over residues 103–115 (TPTSHVSIVTSED). Arg-171 carries the omega-N-methylarginine modification. Disordered regions lie at residues 233 to 254 (RREA…LPEH) and 267 to 331 (RSLA…QPER). The residue at position 268 (Ser-268) is a Phosphoserine. The span at 271–281 (ADDEGGPDLEP) shows a compositional bias: acidic residues. Over residues 289–303 (RRPEYGRGLRARALE) the composition is skewed to basic and acidic residues. A phosphoserine mark is found at Ser-333, Ser-336, Ser-344, and Ser-346. ARM repeat units lie at residues 349–388 (STRK…HLCF), 391–430 (EGIK…NLSY), 434–468 (ADNK…VTGT), 469–509 (LWNL…NEDS), 527–566 (LRNV…DTDN), and 576–623 (MRNL…GKKA). Residues 593-623 (YQEVEPGIPGSAATSQRRRKDDASCFGGKKA) are disordered. At Ser-607 the chain carries Phosphoserine. Positions 608-624 (QRRRKDDASCFGGKKAK) match the Nuclear localization signal motif. Thr-637 carries the phosphothreonine modification. ARM repeat units follow at residues 641-681 (PKRT…AAGA), 694-733 (TYIR…NLSL), 734-776 (DQRN…AVLN), and 777-821 (TIHE…SHVL). The interval 771 to 955 (VVAVLNTIHE…VLGPGAPPFC (185 aa)) is required for interaction with RNA-binding proteins DDX5, HNRNPH2 and SRSF1 and with mRNAs. The segment at 844 to 926 (FQSASTAKGP…KELLKGPGPA (83 aa)) is disordered. A Phosphoserine modification is found at Ser-865. Phosphothreonine is present on Thr-866. The segment covering 872–881 (KNLDGEKSTT) has biased composition (basic and acidic residues).

This sequence belongs to the beta-catenin family. Component of a ribonucleoprotein complex containing mRNAs and RNA-binding proteins including DDX5, HNRNPH2 and SRSF1 as well as ARVCF. Interacts (via the extreme C-terminus) with FRMPD2 (via the PDZ 2 domain). Interacts with CCDC85B. In terms of tissue distribution, expressed in optic nerve sheath envelope (at protein level). Expressed in heart (at protein level).

The protein localises to the cell junction. Its subcellular location is the adherens junction. It is found in the nucleus. It localises to the cytoplasm. Contributes to the regulation of alternative splicing of pre-mRNAs. This is Splicing regulator ARVCF from Rattus norvegicus (Rat).